The chain runs to 253 residues: NAD-dependent protein deacetylase (253 aa).

One can recognise a Deacetylase sirtuin-type domain in the interval 3 to 253 (APSLSSGVEQ…GETLGPFVGN (251 aa)). NAD(+) contacts are provided by Ala-29, Thr-33, Phe-40, Arg-41, Gln-106, Ile-108, Asp-109, and His-126. Phe-40 is a nicotinamide binding site. Nicotinamide is bound by residues Ile-108 and Asp-109. The active-site Proton acceptor is the His-126. Residues Cys-134, Cys-137, Cys-159, and Cys-162 each contribute to the Zn(2+) site. NAD(+) is bound by residues Ser-200, Ser-201, Asn-225, Asp-242, and Ile-243.

The protein belongs to the sirtuin family. Class U subfamily. It depends on Zn(2+) as a cofactor.

It localises to the cytoplasm. The catalysed reaction is N(6)-acetyl-L-lysyl-[protein] + NAD(+) + H2O = 2''-O-acetyl-ADP-D-ribose + nicotinamide + L-lysyl-[protein]. Functionally, NAD-dependent protein deacetylase which modulates the activities of several enzymes which are inactive in their acetylated form. The chain is NAD-dependent protein deacetylase from Rhodopseudomonas palustris (strain ATCC BAA-98 / CGA009).